A 271-amino-acid chain; its full sequence is Thiazole synthase (271 aa).

K104 (schiff-base intermediate with DXP) is an active-site residue. Residues G165, 192–193 (AG), and 214–215 (NT) contribute to the 1-deoxy-D-xylulose 5-phosphate site.

Belongs to the ThiG family. As to quaternary structure, homotetramer. Forms heterodimers with either ThiH or ThiS.

Its subcellular location is the cytoplasm. The catalysed reaction is [ThiS sulfur-carrier protein]-C-terminal-Gly-aminoethanethioate + 2-iminoacetate + 1-deoxy-D-xylulose 5-phosphate = [ThiS sulfur-carrier protein]-C-terminal Gly-Gly + 2-[(2R,5Z)-2-carboxy-4-methylthiazol-5(2H)-ylidene]ethyl phosphate + 2 H2O + H(+). It functions in the pathway cofactor biosynthesis; thiamine diphosphate biosynthesis. Its function is as follows. Catalyzes the rearrangement of 1-deoxy-D-xylulose 5-phosphate (DXP) to produce the thiazole phosphate moiety of thiamine. Sulfur is provided by the thiocarboxylate moiety of the carrier protein ThiS. In vitro, sulfur can be provided by H(2)S. This is Thiazole synthase from Burkholderia mallei (strain ATCC 23344).